The sequence spans 782 residues: Transcription factor SOX-30 (782 aa).

Disordered regions lie at residues 1–37 (MERA…AQPV), 95–117 (LPPG…AAAA), and 139–226 (PPQS…DALK). 2 stretches are compositionally biased toward pro residues: residues 7–35 (EPPP…PPAQ) and 97–106 (PGGPGVPPAP). Basic and acidic residues predominate over residues 203–226 (LDGRRSDEKKAKLEAEEAPRDALK). The HMG box DNA-binding region spans 366–434 (VKRPMNAFMV…KHREEFPGWV (69 aa)). 3 disordered regions span residues 501 to 604 (PTPA…STCP), 704 to 724 (YPDE…DGPP), and 756 to 782 (ASAP…LRNL). A compositionally biased stretch (polar residues) spans 512 to 522 (TLFQPSVSSTG). Pro residues predominate over residues 525–538 (AVPPPSLTPRPSLP). A compositionally biased stretch (polar residues) spans 555 to 574 (SGSSRSVKRSTPGSLESTTR). Basic and acidic residues predominate over residues 704 to 718 (YPDEHTHSEDSRSCE).

As to quaternary structure, interacts with CTNNB1, competitively inhibiting CTNNB1-TCF7L2/TCF4 interaction. As to expression, expressed in the lung (at protein level). Expressed in testes (at protein level). Expressed in preleptotene spermatocytes, round spermatids, and elongated spermatids in the testis (at protein level). Expressed in pachytene spermatocytes during stages 3 to 8 of spermatogenesis (at protein level). Increased expression in diplotene spermatocytes at stage 9-11 and in metaphase spermatocytes or secondary spermatocytes at stage 12. Expressed in ovaries.

Its subcellular location is the nucleus. It is found in the cytoplasm. Acts both as a transcriptional activator and a repressor. Binds to the DNA sequence 5'-ACAAT-3' and shows a preference for guanine residues surrounding this core motif. Binds to its own promoter and activates its own transcription. Required to activate the expression of postmeiotic genes involved in spermiogenesis. Binds to the promoter region of CTNNB1 and represses its transcription which leads to inhibition of Wnt signaling. Also inhibits Wnt signaling by binding to the CTNNB1 protein, preventing interaction of CTNNB1 with TCF7L2/TCF4. The chain is Transcription factor SOX-30 (Sox30) from Mus musculus (Mouse).